The following is a 213-amino-acid chain: Peroxynitrite isomerase (213 aa).

A compositionally biased stretch (low complexity) spans 1 to 10 (MGADATGDTA). The tract at residues 1–26 (MGADATGDTAARGDRAAHGDTASGGA) is disordered. Residues 51 to 57 (GTWRGEG) carry the GXWXGXG motif. A heme b-binding site is contributed by His203.

This sequence belongs to the nitrobindin family. As to quaternary structure, homodimer. Requires heme b as cofactor.

It carries out the reaction peroxynitrite = nitrate. It participates in nitrogen metabolism. Functionally, heme-binding protein able to scavenge peroxynitrite and to protect free L-tyrosine against peroxynitrite-mediated nitration, by acting as a peroxynitrite isomerase that converts peroxynitrite to nitrate. Therefore, this protein likely plays a role in peroxynitrite sensing and in the detoxification of reactive nitrogen and oxygen species (RNS and ROS, respectively). Is able to bind nitric oxide (NO) in vitro, but may act as a sensor of peroxynitrite levels in vivo. This is Peroxynitrite isomerase from Parafrankia sp. (strain EAN1pec).